The sequence spans 538 residues: Syncytin-1 (538 aa).

The signal sequence occupies residues Met-1 to Thr-20. Residues Ala-21–Gln-443 lie on the Extracellular side of the membrane. Asn-169 is a glycosylation site (N-linked (GlcNAc...) asparagine). The CXXC motif lies at Cys-186–Cys-189. 3 cysteine pairs are disulfide-bonded: Cys-186–Cys-189, Cys-186–Cys-405, and Cys-397–Cys-404. Residues Asn-208, Asn-214, Asn-234, Asn-242, Asn-245, and Asn-281 are each glycosylated (N-linked (GlcNAc...) asparagine). Positions Ile-320–Ile-340 are fusion peptide. The tract at residues Leu-380–Thr-396 is immunosuppression. The CX6CC signature appears at Cys-397–Cys-405. The N-linked (GlcNAc...) asparagine glycan is linked to Asn-409. The helical transmembrane segment at Trp-444–Phe-464 threads the bilayer. The tract at residues Gly-465–Lys-484 is essential for the fusiogenic function. Over Gly-465–Ser-538 the chain is Cytoplasmic. The interval Pro-501–Ser-538 is disordered.

This sequence belongs to the gamma type-C retroviral envelope protein family. HERV class-I W env subfamily. In terms of assembly, the mature envelope protein (Env) consists of a trimer of SU-TM heterodimers attached probably by a labile interchain disulfide bond. Interacts with the C-type lectin CD209/DC-SIGN. Post-translationally, specific enzymatic cleavages in vivo yield mature proteins. Envelope glycoproteins are synthesized as an inactive precursor that is heavily N-glycosylated and processed likely by furin in the Golgi to yield the mature SU and TM proteins. The cleavage site between SU and TM requires the minimal sequence [KR]-X-[KR]-R. The CXXC motif is highly conserved across a broad range of retroviral envelope proteins. It is thought to participate in the formation of a labile disulfide bond possibly with the CX6CC motif present in the transmembrane protein.

It localises to the cell membrane. The protein resides in the virion. This endogenous retroviral envelope protein has retained its original fusogenic properties and participates in trophoblast fusion and the formation of a syncytium during placenta morphogenesis. May recognize and induce fusion through binding of SLC1A4 and SLC1A5. Its function is as follows. Endogenous envelope proteins may have kept, lost or modified their original function during evolution. Retroviral envelope proteins mediate receptor recognition and membrane fusion during early infection. The surface protein (SU) mediates receptor recognition, while the transmembrane protein (TM) acts as a class I viral fusion protein. The protein may have at least 3 conformational states: pre-fusion native state, pre-hairpin intermediate state, and post-fusion hairpin state. During viral and target cell membrane fusion, the coiled coil regions (heptad repeats) assume a trimer-of-hairpins structure, positioning the fusion peptide in close proximity to the C-terminal region of the ectodomain. The formation of this structure appears to drive apposition and subsequent fusion of membranes. The polypeptide is Syncytin-1 (ERVW-1) (Pongo pygmaeus (Bornean orangutan)).